A 316-amino-acid chain; its full sequence is DNA-directed RNA polymerase III subunit RPC6 (316 aa).

Ala2 is subject to N-acetylalanine. Glycyl lysine isopeptide (Lys-Gly) (interchain with G-Cter in SUMO2) cross-links involve residues Lys5 and Lys7. [4Fe-4S] cluster-binding residues include Cys287, Cys290, Cys296, and Cys307.

It belongs to the eukaryotic RPC34/RPC39 RNA polymerase subunit family. As to quaternary structure, component of the RNA polymerase III complex consisting of 17 subunits: a ten-subunit horseshoe-shaped catalytic core composed of POLR3A/RPC1, POLR3B/RPC2, POLR1C/RPAC1, POLR1D/RPAC2, POLR3K/RPC10, POLR2E/RPABC1, POLR2F/RPABC2, POLR2H/RPABC3, POLR2K/RPABC4 and POLR2L/RPABC5; a mobile stalk composed of two subunits POLR3H/RPC8 and CRCP/RPC9, protruding from the core and functioning primarily in transcription initiation; and additional subunits homologous to general transcription factors of the RNA polymerase II machinery, POLR3C/RPC3-POLR3F/RPC6-POLR3G/RPC7 heterotrimer required for transcription initiation and POLR3D/RPC4-POLR3E/RPC5 heterodimer involved in both transcription initiation and termination. Directly interacts with POLR3C. Interacts with TBP and TFIIIB90 and GTF3C4. Interacts with MAF1. As part of the RNA polymerase III complex, interacts with PKP2.

The protein localises to the nucleus. DNA-dependent RNA polymerase catalyzes the transcription of DNA into RNA using the four ribonucleoside triphosphates as substrates. Specific peripheric component of RNA polymerase III (Pol III) which synthesizes small non-coding RNAs including 5S rRNA, snRNAs, tRNAs and miRNAs from at least 500 distinct genomic loci. Part of POLR3C/RPC3-POLR3F/RPC6-POLR3G/RPC7 heterotrimer that coordinates the dynamics of Pol III stalk and clamp modules during the transition from apo to elongation state. Pol III plays a key role in sensing and limiting infection by intracellular bacteria and DNA viruses, including varicella zoster virus. Acts as a nuclear and cytosolic DNA sensor detecting AT-rich DNA, involved in innate immune response. Can sense non-self dsDNA that serves as template for transcription into dsRNA. The non-self RNA polymerase III transcripts, such as Epstein-Barr virus-encoded RNAs (EBERs) induce type I interferon and NF-kappa-B through the RIG-I pathway. Preferentially binds double-stranded DNA (dsDNA). The sequence is that of DNA-directed RNA polymerase III subunit RPC6 from Homo sapiens (Human).